A 63-amino-acid chain; its full sequence is 2-hydroxymuconate tautomerase (63 aa).

Catalysis depends on P2, which acts as the Proton acceptor; via imino nitrogen.

This sequence belongs to the 4-oxalocrotonate tautomerase family. Homohexamer.

The catalysed reaction is (2Z,4E)-2-hydroxyhexa-2,4-dienedioate = (3E)-2-oxohex-3-enedioate. The protein operates within aromatic compound metabolism; salicylate degradation. Catalyzes the ketonization of 2-hydroxymuconate stereoselectively to yield 2-oxo-3-hexenedioate. This chain is 2-hydroxymuconate tautomerase (tdnL), found in Pseudomonas putida (Arthrobacter siderocapsulatus).